We begin with the raw amino-acid sequence, 56 residues long: MKFIVLLLIVTSVLMMFAVTTEASPQVNHKIERAKCGQKGKCYDGVNVQCIDCNTG.

An N-terminal signal peptide occupies residues 1-25; the sequence is MKFIVLLLIVTSVLMMFAVTTEASP. At Q26 the chain carries Pyrrolidone carboxylic acid. Threonine amide is present on T55.

It belongs to the caterpillar 2 family. In terms of processing, contains 2 disulfide bonds. In terms of tissue distribution, expressed by the venom apparatus.

The protein resides in the secreted. Probable toxin. The protein is U-megalopygitoxin(2)-Mo9 of Megalopyge opercularis (Southern flannel moth).